Reading from the N-terminus, the 207-residue chain is Small ribosomal subunit protein uS4 (207 aa).

Residues 31-55 (KCKLDSKPGQHGRTSGARTSDYGTQ) form a disordered region. The span at 42 to 53 (GRTSGARTSDYG) shows a compositional bias: polar residues. The region spanning 97 to 160 (SRLDNVVYRM…KKQARIIEAL (64 aa)) is the S4 RNA-binding domain.

Belongs to the universal ribosomal protein uS4 family. As to quaternary structure, part of the 30S ribosomal subunit. Contacts protein S5. The interaction surface between S4 and S5 is involved in control of translational fidelity.

Functionally, one of the primary rRNA binding proteins, it binds directly to 16S rRNA where it nucleates assembly of the body of the 30S subunit. In terms of biological role, with S5 and S12 plays an important role in translational accuracy. This Burkholderia vietnamiensis (strain G4 / LMG 22486) (Burkholderia cepacia (strain R1808)) protein is Small ribosomal subunit protein uS4.